Consider the following 124-residue polypeptide: uncharacterized protein (124 aa).

One can recognise a GIY-YIG domain in the interval 42 to 118 (DKGGIFMFYN…INTQHSKYNI (77 aa)).

This is an uncharacterized protein from Bacillus subtilis (strain 168).